We begin with the raw amino-acid sequence, 408 residues long: GTPase Obg (408 aa).

The 159-residue stretch at M1–L159 folds into the Obg domain. The segment at N127–R150 is disordered. Residues R129–P143 are compositionally biased toward polar residues. An OBG-type G domain is found at A160–E333. Residues G166–S173, F191–V195, D213–G216, N283–D286, and S314–I316 each bind GTP. Residues S173 and T193 each contribute to the Mg(2+) site. The segment at H382–D408 is disordered. Over residues G385–P401 the composition is skewed to acidic residues.

The protein belongs to the TRAFAC class OBG-HflX-like GTPase superfamily. OBG GTPase family. In terms of assembly, monomer. Mg(2+) serves as cofactor.

It localises to the cytoplasm. Its function is as follows. An essential GTPase which binds GTP, GDP and possibly (p)ppGpp with moderate affinity, with high nucleotide exchange rates and a fairly low GTP hydrolysis rate. Plays a role in control of the cell cycle, stress response, ribosome biogenesis and in those bacteria that undergo differentiation, in morphogenesis control. This is GTPase Obg from Pseudomonas putida (strain GB-1).